A 205-amino-acid polypeptide reads, in one-letter code: N-(5'-phosphoribosyl)anthranilate isomerase (205 aa).

It belongs to the TrpF family.

The catalysed reaction is N-(5-phospho-beta-D-ribosyl)anthranilate = 1-(2-carboxyphenylamino)-1-deoxy-D-ribulose 5-phosphate. It functions in the pathway amino-acid biosynthesis; L-tryptophan biosynthesis; L-tryptophan from chorismate: step 3/5. The polypeptide is N-(5'-phosphoribosyl)anthranilate isomerase (Maridesulfovibrio salexigens (strain ATCC 14822 / DSM 2638 / NCIMB 8403 / VKM B-1763) (Desulfovibrio salexigens)).